Here is a 148-residue protein sequence, read N- to C-terminus: UPF0756 membrane protein KPN78578_11500 (148 aa).

Transmembrane regions (helical) follow at residues 14–34 (ALGF…LIIV), 51–71 (LTVG…SGTL), 86–106 (LLAI…VSLM), and 121–141 (VLGV…AGII).

This sequence belongs to the UPF0756 family.

It localises to the cell membrane. This is UPF0756 membrane protein KPN78578_11500 from Klebsiella pneumoniae subsp. pneumoniae (strain ATCC 700721 / MGH 78578).